The sequence spans 384 residues: Dual specificity protein phosphatase 5 (384 aa).

Residues 19–141 (AEARCVVLDC…FYSQYPECCV (123 aa)) enclose the Rhodanese domain. Residues 53-74 (RRARGGAVSARYVLADEAARAR) carry the Nuclear localization signal motif. One can recognise a Tyrosine-protein phosphatase domain in the interval 178–319 (GPVEILPFLY…LLQYESEILP (142 aa)). The Phosphocysteine intermediate role is filled by cysteine 263.

Belongs to the protein-tyrosine phosphatase family. Non-receptor class dual specificity subfamily.

It localises to the nucleus. The enzyme catalyses O-phospho-L-tyrosyl-[protein] + H2O = L-tyrosyl-[protein] + phosphate. It catalyses the reaction O-phospho-L-seryl-[protein] + H2O = L-seryl-[protein] + phosphate. The catalysed reaction is O-phospho-L-threonyl-[protein] + H2O = L-threonyl-[protein] + phosphate. In terms of biological role, dual specificity protein phosphatase; active with phosphotyrosine, phosphoserine and phosphothreonine residues. The highest relative activity is toward ERK1. This Rattus norvegicus (Rat) protein is Dual specificity protein phosphatase 5 (Dusp5).